The sequence spans 277 residues: Large ribosomal subunit protein uL2 (277 aa).

The disordered stretch occupies residues 222-277 (GVAMNPVDHPHGGGEGRTSGGRHPVTPWGKPTKGKKTRSNKATDKFIMRSRHQRKK).

The protein belongs to the universal ribosomal protein uL2 family. Part of the 50S ribosomal subunit. Forms a bridge to the 30S subunit in the 70S ribosome.

In terms of biological role, one of the primary rRNA binding proteins. Required for association of the 30S and 50S subunits to form the 70S ribosome, for tRNA binding and peptide bond formation. It has been suggested to have peptidyltransferase activity; this is somewhat controversial. Makes several contacts with the 16S rRNA in the 70S ribosome. In Brucella canis (strain ATCC 23365 / NCTC 10854 / RM-666), this protein is Large ribosomal subunit protein uL2.